A 354-amino-acid chain; its full sequence is DNA integrity scanning protein DisA (354 aa).

Residues 6-144 form the DAC domain; sequence GMKIKDTLKI…GDIKYVLRDS (139 aa). ATP is bound by residues Gly-73, Leu-91, and 104-108; that span reads TRHRT.

This sequence belongs to the DisA family. Homooctamer. Mg(2+) serves as cofactor.

It carries out the reaction 2 ATP = 3',3'-c-di-AMP + 2 diphosphate. In terms of biological role, participates in a DNA-damage check-point that is active prior to asymmetric division when DNA is damaged. DisA forms globular foci that rapidly scan along the chromosomes during sporulation, searching for lesions. When a lesion is present, DisA pauses at the lesion site. This triggers a cellular response that culminates in a temporary block in sporulation initiation. Also has diadenylate cyclase activity, catalyzing the condensation of 2 ATP molecules into cyclic di-AMP (c-di-AMP). c-di-AMP acts as a signaling molecule that couples DNA integrity with progression of sporulation. The rise in c-di-AMP level generated by DisA while scanning the chromosome, operates as a positive signal that advances sporulation; upon encountering a lesion, the DisA focus arrests at the damaged site and halts c-di-AMP synthesis. This Clostridium botulinum (strain Eklund 17B / Type B) protein is DNA integrity scanning protein DisA.